The following is a 571-amino-acid chain: GABA-specific permease (571 aa).

Topologically, residues 1-73 (MSMSSKNENK…IGYKQELKRQ (73 aa)) are cytoplasmic. The helical transmembrane segment at 74 to 94 (FSTLQVFGIAFSIMGLLPSIA) threads the bilayer. Residues 95–105 (SVMGGGLGGGP) lie on the Vacuolar side of the membrane. Residues 106 to 126 (ATLVWGWFVAAFFILLVGITM) form a helical membrane-spanning segment. At 127–153 (AEHASSIPTAGGLYYWTYYYAPEGYKE) the chain is on the cytoplasmic side. The helical transmembrane segment at 154-174 (IISFIIGCSNSLALAAGVCSI) threads the bilayer. At 175–198 (DYGLAEEIAAAVTLTKDGNFEVTS) the chain is on the vacuolar side. The chain crosses the membrane as a helical span at residues 199 to 219 (GKLYGIFAGAVVVMCICTCVA). The Cytoplasmic segment spans residues 220 to 228 (SGAIARLQT). The chain crosses the membrane as a helical span at residues 229 to 249 (LSIFANLFIIVLLFIALPIGT). The Vacuolar segment spans residues 250-271 (KHRMGGFNDGDFIFGKYENLSD). A helical transmembrane segment spans residues 272 to 292 (WNNGWQFCLAGFMPAVWTIGS). At 293–312 (FDSCVHQSEEAKDAKKSVPI) the chain is on the cytoplasmic side. A helical membrane pass occupies residues 313 to 333 (GIISSIAVCWILGWLIIICLM). The Vacuolar portion of the chain corresponds to 334–364 (ACINPDIDSVLDSKYGFALAQIIYDSLGKKW). The helical transmembrane segment at 365–385 (AIAFMSLIAFCQFLMGASITT) threads the bilayer. Over 386-416 (AVSRQVWAFSRDNGLPLSKYIKRVDSKYSVP) the chain is Cytoplasmic. The chain crosses the membrane as a helical span at residues 417-437 (FFAILAACVGSLILGLLCLID). The Vacuolar segment spans residues 438–441 (DAAT). A helical membrane pass occupies residues 442–462 (DALFSLAVAGNNLAWSTPTVF). At 463–482 (RLTSGRDLFRPGPFYLGKIW) the chain is on the cytoplasmic side. Residues 483–503 (SPIVAWTGVAFQLFIIILVMF) form a helical membrane-spanning segment. At 504–514 (PSQQHGITKST) the chain is on the vacuolar side. Residues 515–535 (MNYACVIGPGIWILAGIYYKV) traverse the membrane as a helical segment. At 536–571 (YKKKYYHGPATNLSDDDYTEAVGADVIDTIMSKQEP) the chain is on the cytoplasmic side.

Belongs to the amino acid-polyamine-organocation (APC) superfamily. Amino acid/choline transporter (ACT) (TC 2.A.3.4) family.

It is found in the vacuole membrane. Functionally, required for high-affinity, high-specificity GABA transport. Also transports putrescine. This is GABA-specific permease (UGA4) from Saccharomyces cerevisiae (strain ATCC 204508 / S288c) (Baker's yeast).